We begin with the raw amino-acid sequence, 527 residues long: MSAHSTAVGTAKRRTFAIISHPDAGKTTITEKLLLFGNAIQVGGSVKGKKGPHAKSDWMSMEQERGISVTSSVMQFPYKERTVNLLDTPGHEDFSEDTYRTLTAVDSVLMVIDGAKGVEDRTIKLMEVCRLRDTPILSFINKMDRDIRDPIDVMDEIETVLNIEAAPINWPIGMGKEFKGVYNLYTDIIHVFHHGQGSRIPDDTQIKGLNSPEADALLGAYAADIRDEIELVKGATHKFDLDAYLAGKLTPVFFGTALGNFGVREMLDGFVEWAPPPLDREANTRVVSAVEDKFSGFVFKIQANMDPKHRDRIAFMRVCSGTYTRGMKMRHVRLGKDVKISDAVTFLAGDRSQVEEAISGDIIGLHNHGTIQIGDTFTEGEDLKFTGIPHFAPELFRRIRLKDPLKVKQLQKGLQQLSEEGSTQVFFPLRNNDIIVGAVGVLQFEVVAYRLKDEYKVEAIYEPVSVATARWVDCEDDKKMAEFKRKCEDNLAIDGGGHLTYLAPTRVNLSLSQERYPDVLFRSTREH.

The tr-type G domain occupies 11-278 (AKRRTFAIIS…GFVEWAPPPL (268 aa)). GTP-binding positions include 20 to 27 (SHPDAGKT), 87 to 91 (DTPGH), and 141 to 144 (NKMD).

It belongs to the TRAFAC class translation factor GTPase superfamily. Classic translation factor GTPase family. PrfC subfamily.

The protein resides in the cytoplasm. Functionally, increases the formation of ribosomal termination complexes and stimulates activities of RF-1 and RF-2. It binds guanine nucleotides and has strong preference for UGA stop codons. It may interact directly with the ribosome. The stimulation of RF-1 and RF-2 is significantly reduced by GTP and GDP, but not by GMP. This Saccharophagus degradans (strain 2-40 / ATCC 43961 / DSM 17024) protein is Peptide chain release factor 3.